The sequence spans 302 residues: Gigasin-6 (302 aa).

Positions 1–22 (MSSRNLLYSSVVLFLVLFYCHG) are cleaved as a signal peptide. Residues 75–95 (ITTDTLFGLGGISALFANILI) form a helical membrane-spanning segment.

Component of the organic matrix of calcified shell layers.

The protein localises to the membrane. This chain is Gigasin-6, found in Magallana gigas (Pacific oyster).